The sequence spans 154 residues: Prefoldin subunit alpha (154 aa).

Residues 92-102 (DNAVESLSTKQ) are compositionally biased toward polar residues. Residues 92-154 (DNAVESLSTK…MQDQQPEDNE (63 aa)) form a disordered region. Residues 103–114 (DALDNRIESLRD) are compositionally biased toward basic and acidic residues. Positions 128–148 (QQAQQMQQQMQQQQMQQMQDQ) are enriched in low complexity.

Belongs to the prefoldin subunit alpha family. Heterohexamer of two alpha and four beta subunits.

The protein resides in the cytoplasm. Its function is as follows. Molecular chaperone capable of stabilizing a range of proteins. Seems to fulfill an ATP-independent, HSP70-like function in archaeal de novo protein folding. The protein is Prefoldin subunit alpha of Haloquadratum walsbyi (strain DSM 16790 / HBSQ001).